We begin with the raw amino-acid sequence, 298 residues long: Probable mitochondrial 2-oxodicarboxylate carrier (298 aa).

The next 6 helical transmembrane spans lie at 6–26 (IPFP…VLTL), 62–81 (HRLY…KRAL), 105–125 (ALSI…VVPF), 159–179 (ALYN…AGYF), 203–223 (LIAG…FDVI), and 267–287 (VLRL…VIEF). Solcar repeat units follow at residues 6–92 (IPFP…YSKL), 102–188 (SSPA…IRNS), and 197–287 (GEIR…VIEF).

Belongs to the mitochondrial carrier (TC 2.A.29) family.

It localises to the mitochondrion inner membrane. Functionally, transports C5-C7 oxodicarboxylates across the inner membranes of mitochondria. The protein is Probable mitochondrial 2-oxodicarboxylate carrier of Schizosaccharomyces pombe (strain 972 / ATCC 24843) (Fission yeast).